The sequence spans 289 residues: Serine/threonine-protein phosphatase Pgam5, mitochondrial (289 aa).

Residues 7–23 traverse the membrane as a helical segment; sequence FACGTGAGLLTFYLTKL.

It belongs to the phosphoglycerate mutase family. BPG-dependent PGAM subfamily. In terms of assembly, interacts with Pk92B/ASK1.

Its subcellular location is the mitochondrion outer membrane. The catalysed reaction is O-phospho-L-seryl-[protein] + H2O = L-seryl-[protein] + phosphate. The enzyme catalyses O-phospho-L-threonyl-[protein] + H2O = L-threonyl-[protein] + phosphate. Its function is as follows. Displays phosphatase activity for serine/threonine residues, and dephosphorylates and activates Pk92B kinase. Has apparently no phosphoglycerate mutase activity. This is Serine/threonine-protein phosphatase Pgam5, mitochondrial (Pgam5) from Drosophila pseudoobscura pseudoobscura (Fruit fly).